Here is a 434-residue protein sequence, read N- to C-terminus: MKRVYSKIECIAGNVITVTAQGIKYGELAIVKAKDTSSLAEVIKLDREKVSLQVYGGTRGISTSDEIKFLGHSMQVSFSDNLLGRIFDGSGNPRDGGPSLDDNLIEIGGPSANPAKRIVPRNMIRTGLPMIDVFNTLVESQKLPIFSVSGEPYNELLLRIALQAEVDLIILGGMGLKHDDYLTFKDSLEKGGALSRTIFFVHTANDSVVESLTVPDISLSVAEKFALKGKKVLVLLTDMTNFADAMKEISITMEQVPSNRGYPGDLYSQLAYRYEKAIDFEGAGSITILTVTTMPGDDVTHPVPDNTGYITEGQYYLKGGRIEPFGSLSRLKQMVNGRTRDDHRTIMDSMIKLYASSKDSVEKKAMGFNMTKWDEKLLKYSNMFESKMMDLSVNIPLEEALDLGWDILASCFSPKETGIKTDLIEKYWPKKETS.

Belongs to the ATPase alpha/beta chains family.

Produces ATP from ADP in the presence of a proton gradient across the membrane. The V-type beta chain is a regulatory subunit. In Borrelia garinii subsp. bavariensis (strain ATCC BAA-2496 / DSM 23469 / PBi) (Borreliella bavariensis), this protein is V-type ATP synthase beta chain.